Consider the following 201-residue polypeptide: Charged multivesicular body protein 6 (201 aa).

Residue Gly-2 is the site of N-myristoyl glycine attachment. The stretch at 10–145 (QSRVTEQDKA…YQRQIDELLA (136 aa)) forms a coiled coil. The residue at position 119 (Ser-119) is a Phosphoserine. The residue at position 130 (Thr-130) is a Phosphothreonine. The Type-2 MIT-interacting motif signature appears at 168 to 179 (IELPEVPSEPLP). The segment at 171 to 201 (PEVPSEPLPEKIPEDVPVKARPRQAELVAAS) is disordered. Over residues 178–188 (LPEKIPEDVPV) the composition is skewed to basic and acidic residues.

It belongs to the SNF7 family. As to quaternary structure, probable core component of the endosomal sorting required for transport complex III (ESCRT-III). ESCRT-III components are thought to multimerize to form a flat lattice on the perimeter membrane of the endosome. Several assembly forms of ESCRT-III may exist that interact and act sequentially. Interacts with VPS4A; the interaction is direct. Interacts with VPS4B; the interaction is direct. Interacts with CHMP4A, CHMP4B and CHMP4C. Interacts with SNF8, VPS25 and VPS36. Post-translationally, ISGylated in a CHMP5-dependent manner. Isgylation weakens its interaction with VPS4A.

The protein localises to the endomembrane system. It localises to the endosome membrane. Its subcellular location is the late endosome membrane. The protein resides in the membrane. Functionally, probable core component of the endosomal sorting required for transport complex III (ESCRT-III) which is involved in multivesicular bodies (MVBs) formation and sorting of endosomal cargo proteins into MVBs. MVBs contain intraluminal vesicles (ILVs) that are generated by invagination and scission from the limiting membrane of the endosome and mostly are delivered to lysosomes enabling degradation of membrane proteins, such as stimulated growth factor receptors, lysosomal enzymes and lipids. The MVB pathway appears to require the sequential function of ESCRT-O, -I,-II and -III complexes. ESCRT-III proteins mostly dissociate from the invaginating membrane before the ILV is released. The ESCRT machinery also functions in topologically equivalent membrane fission events, such as the terminal stages of cytokinesis and the budding of enveloped viruses (lentiviruses). ESCRT-III proteins are believed to mediate the necessary vesicle extrusion and/or membrane fission activities, possibly in conjunction with the AAA ATPase VPS4. In the ESCRT-III complex, it probably serves as an acceptor for the ESCRT-II complex on endosomal membrane. The polypeptide is Charged multivesicular body protein 6 (CHMP6) (Pongo abelii (Sumatran orangutan)).